Consider the following 310-residue polypeptide: MSFGSFDHICNKTALPLCSVVGAVNQSAFFQRGIVPDCYARSVELANTMIFQIGNAFVHFGGLIILLIIIFNVRAKYTAIGRKEMLFFLYLAIGLIVSSLIVDCGVSPPSSTSYAYFVAVQIGLSSALCICLLYNGFLCFQFWEDGTSRSMWILRVGCFAWFAVNFIVCIITFKHWDTALDYRKTTTLFIFAYVLNAVILAVYVVSQIILVVFALESYWSLGAILLGVFFFVAGQVLTYVFSDKICRGASHYVDGLFFGSACNVFTFMMIYKFWDMITSDDLEFSVANVEQPINEFGVGADDEKRSSMFF.

The next 7 helical transmembrane spans lie at 50 to 70 (IFQI…LIII), 86 to 106 (LFFL…DCGV), 114 to 134 (YAYF…CLLY), 151 to 171 (MWIL…VCII), 194 to 214 (VLNA…VVFA), 221 to 241 (LGAI…TYVF), and 257 to 277 (FFGS…WDMI).

It belongs to the CHS7 family. Interacts with CHS3.

The protein localises to the endoplasmic reticulum membrane. In terms of biological role, chaperone required for the export of the chitin synthase CHS3 from the endoplasmic reticulum. This Candida albicans (strain SC5314 / ATCC MYA-2876) (Yeast) protein is Chitin synthase export chaperone (CHS7).